Here is a 110-residue protein sequence, read N- to C-terminus: Small ribosomal subunit protein eS25 (110 aa).

The interval 1–39 (MPPKAAGGKSKQIQASKAAAKGSSGGAGRKKWSKGRSRE) is disordered.

The protein belongs to the eukaryotic ribosomal protein eS25 family.

The chain is Small ribosomal subunit protein eS25 (rps25) from Dictyostelium discoideum (Social amoeba).